The sequence spans 1550 residues: MGARNSVLRGKKADELEKVRLRPGGKKKYRLKHIVWAANELDKFGLAESLLESKEGCQKILRVLDPLVPTGSENLKSLFNTVCVIWCLHAEEKVKDTEEAKKLAQRHLVAETGTAEKMPNTSRPTAPPSGKRGNYPVQQAGGNYVHVPLSPRTLNAWVKLVEEKKFGAEVVPGFQALSEGCTPYDINQMLNCVGDHQAAMQIIREIINEEAADWDSQHPIPGPLPAGQLRDPRGSDIAGTTSTVDEQIQWMYRPQNPVPVGNIYRRWIQIGLQKCVRKYNPTNILDIKQGPKEPFQSYVDRFYKSLRAEQTDPAVKNWMTQTLLIQNANPDCKLVLKGLGMNPTLEEMLTACQGVGGPGQKARLMAEALKEAMGPSPIPFAAAQQRKAIRYWNCGKEGHSARQCRAPRRQGCWKCGKPGHIMANCPERQAGFFRVGPTGKEASQLPRDPSPSGADTNSTSGRSSSGTVGEIYAAREKAEGAEGETIQRGDGGLAAPRAERDTSQRGDRGLAAPQFSLWKRPVVTAYIEDQPVEVLLDTGADDSIVAGIELGDNYTPKIVGGIGGFINTKEYKNVEIKVLNKRVRATIMTGDTPINIFGRNILTALGMSLNLPVAKIEPIKVTLKPGKDGPRLKQWPLTKEKIEALKEICEKMEKEGQLEEAPPTNPYNTPTFAIKKKDKNKWRMLIDFRELNKVTQDFTEIQLGIPHPAGLAKKKRISILDVGDAYFSIPLHEDFRQYTAFTLPAVNNMEPGKRYIYKVLPQGWKGSPAIFQYTMRQVLEPFRKANPDVILIQYMDDILIASDRTGLEHDKVVLQLKELLNGLGFSTPDEKFQKDPPFQWMGCELWPTKWKLQKLQLPQKDIWTVNDIQKLVGVLNWAAQIYSGIKTKHLCRLIRGKMTLTEEVQWTELAEAELEENKIILSQEQEGYYYQEEKELEATIQKSQGHQWTYKIHQEEKILKVGKYAKIKNTHTNGVRLLAQVVQKIGKEALVIWGRIPKFHLPVERETWEQWWDNYWQVTWIPEWDFVSTPPLVRLTFNLVGDPIPGAETFYTDGSCNRQSKEGKAGYVTDRGKDKVKVLEQTTNQQAELEVFRMALADSGPKVNIIVDSQYVMGIVAGQPTESENRIVNQIIEEMIKKEAVYVAWVPAHKGIGGNQEVDHLVSQGIRQVLFLEKIEPAQEEHEKYHSIIKELTHKFGIPLLVARQIVNSCAQCQQKGEAIHGQVNAEIGVWQMDYTHLEGKIIIVAVHVASGFIEAEVIPQESGRQTALFLLKLASRWPITHLHTDNGPNFTSQEVKMVAWWVGIEQSFGVPYNPQSQGVVEAMNHHLKNQISRIREQANTIETIVLMAVHCMNFKRRGGIGDMTPAERLINMITTEQEIQFLQRKNSNFKNFQVYYREGRDQLWKGPGELLWKGEGAVIVKVGTDIKVVPRRKAKIIRDYGGRQELDSSPHLEGAREDGEMACPCQVPEIQNKRPRGGALCSPPQGGMGMVDLQQGNIPTTRKKSSRNTGILEPNTRKRMALLSCSKINLVYRKVLDRCYPRLCRHPNT.

The N-myristoyl glycine; by host moiety is linked to residue Gly2. An interaction with Gp41 region spans residues 7 to 31 (VLRGKKADELEKVRLRPGGKKKYRL). The Nuclear export signal motif lies at 16–22 (LEKVRLR). The short motif at 26-32 (KKKYRLK) is the Nuclear localization signal element. The interval 110–136 (AETGTAEKMPNTSRPTAPPSGKRGNYP) is disordered. Tyr135 is modified (phosphotyrosine; by host). The interval 191-228 (NCVGDHQAAMQIIREIINEEAADWDSQHPIPGPLPAGQ) is interaction with human PPIA/CYPA and NUP153. Positions 279–365 (YNPTNILDIK…GGPGQKARLM (87 aa)) are dimerization/Multimerization of capsid protein p24. CCHC-type zinc fingers lie at residues 389–406 (IRYW…QCRA) and 410–427 (QGCW…NCPE). The disordered stretch occupies residues 437–508 (PTGKEASQLP…ERDTSQRGDR (72 aa)). Positions 456–469 (TNSTSGRSSSGTVG) are enriched in low complexity. Basic and acidic residues predominate over residues 497-508 (RAERDTSQRGDR). A dimerization of protease region spans residues 513–517 (PQFSL). Residues 532 to 601 (VEVLLDTGAD…TPINIFGRNI (70 aa)) enclose the Peptidase A2 domain. The For protease activity; shared with dimeric partner role is filled by Asp537. Dimerization of protease stretches follow at residues 561–567 (GIGGFIN) and 600–612 (NILT…LNLP). In terms of domain architecture, Reverse transcriptase spans 655 to 845 (EGQLEEAPPT…PPFQWMGCEL (191 aa)). Mg(2+) contacts are provided by Asp721, Asp796, and Asp797. Positions 838–846 (FQWMGCELW) are RT 'primer grip'. The short motif at 1008–1024 (WEQWWDNYWQVTWIPEW) is the Tryptophan repeat motif element. The RNase H type-1 domain maps to 1044 to 1167 (IPGAETFYTD…VDHLVSQGIR (124 aa)). Asp1053, Glu1088, Asp1108, and Asp1159 together coordinate Mg(2+). The Integrase-type zinc finger occupies 1173 to 1214 (EKIEPAQEEHEKYHSIIKELTHKFGIPLLVARQIVNSCAQCQ). Zn(2+)-binding residues include His1182, His1186, Cys1210, and Cys1213. One can recognise an Integrase catalytic domain in the interval 1223–1374 (QVNAEIGVWQ…TPAERLINMI (152 aa)). Mg(2+) contacts are provided by Asp1234, Asp1286, and Glu1322. The segment at residues 1393–1440 (FQVYYREGRDQLWKGPGELLWKGEGAVIVKVGTDIKVVPRRKAKIIRD) is a DNA-binding region (integrase-type).

As to quaternary structure, homotrimer; further assembles as hexamers of trimers. Interacts with gp41 (via C-terminus). Interacts with host CALM1; this interaction induces a conformational change in the Matrix protein, triggering exposure of the myristate group. Interacts with host AP3D1; this interaction allows the polyprotein trafficking to multivesicular bodies during virus assembly. Part of the pre-integration complex (PIC) which is composed of viral genome, matrix protein, Vpr and integrase. Homodimer; the homodimer further multimerizes as homohexamers or homopentamers. Interacts with human PPIA/CYPA. Interacts with human NUP153. Interacts with host PDZD8; this interaction stabilizes the capsid. Interacts with monkey TRIM5; this interaction destabilizes the capsid. In terms of assembly, homodimer, whose active site consists of two apposed aspartic acid residues. As to quaternary structure, heterodimer of p66 RT and p51 RT (RT p66/p51). Heterodimerization of RT is essential for DNA polymerase activity. The overall folding of the subdomains is similar in p66 RT and p51 RT but the spatial arrangements of the subdomains are dramatically different. Homotetramer; may further associate as a homohexadecamer. Part of the pre-integration complex (PIC) which is composed of viral genome, matrix protein, Vpr and integrase. Interacts with human SMARCB1/INI1 and human PSIP1/LEDGF isoform 1. Interacts with human KPNA3; this interaction might play a role in nuclear import of the pre-integration complex. Interacts with human NUP153; this interaction might play a role in nuclear import of the pre-integration complex. Requires Mg(2+) as cofactor. Post-translationally, specific enzymatic cleavages by the viral protease yield mature proteins. The protease is released by autocatalytic cleavage. The polyprotein is cleaved during and after budding, this process is termed maturation. Proteolytic cleavage of p66 RT removes the RNase H domain to yield the p51 RT subunit. Nucleocapsid protein p7 might be further cleaved after virus entry.

It is found in the host cell membrane. The protein resides in the host endosome. It localises to the host multivesicular body. The protein localises to the virion membrane. Its subcellular location is the host nucleus. It is found in the host cytoplasm. The protein resides in the virion. It carries out the reaction Endopeptidase for which the P1 residue is preferably hydrophobic.. It catalyses the reaction Endohydrolysis of RNA in RNA/DNA hybrids. Three different cleavage modes: 1. sequence-specific internal cleavage of RNA. Human immunodeficiency virus type 1 and Moloney murine leukemia virus enzymes prefer to cleave the RNA strand one nucleotide away from the RNA-DNA junction. 2. RNA 5'-end directed cleavage 13-19 nucleotides from the RNA end. 3. DNA 3'-end directed cleavage 15-20 nucleotides away from the primer terminus.. The catalysed reaction is 3'-end directed exonucleolytic cleavage of viral RNA-DNA hybrid.. The enzyme catalyses DNA(n) + a 2'-deoxyribonucleoside 5'-triphosphate = DNA(n+1) + diphosphate. Protease: The viral protease is inhibited by many synthetic protease inhibitors (PIs), such as amprenavir, atazanavir, indinavir, loprinavir, nelfinavir, ritonavir and saquinavir. Use of protease inhibitors in tritherapy regimens permit more ambitious therapeutic strategies. Reverse transcriptase/ribonuclease H: RT can be inhibited either by nucleoside RT inhibitors (NRTIs) or by non nucleoside RT inhibitors (NNRTIs). NRTIs act as chain terminators, whereas NNRTIs inhibit DNA polymerization by binding a small hydrophobic pocket near the RT active site and inducing an allosteric change in this region. Classical NRTIs are abacavir, adefovir (PMEA), didanosine (ddI), lamivudine (3TC), stavudine (d4T), tenofovir (PMPA), zalcitabine (ddC), and zidovudine (AZT). Classical NNRTIs are atevirdine (BHAP U-87201E), delavirdine, efavirenz (DMP-266), emivirine (I-EBU), and nevirapine (BI-RG-587). The tritherapies used as a basic effective treatment of AIDS associate two NRTIs and one NNRTI. In terms of biological role, mediates, with Gag polyprotein, the essential events in virion assembly, including binding the plasma membrane, making the protein-protein interactions necessary to create spherical particles, recruiting the viral Env proteins, and packaging the genomic RNA via direct interactions with the RNA packaging sequence (Psi). Gag-Pol polyprotein may regulate its own translation, by the binding genomic RNA in the 5'-UTR. At low concentration, the polyprotein would promote translation, whereas at high concentration, the polyprotein would encapsidate genomic RNA and then shut off translation. Targets the polyprotein to the plasma membrane via a multipartite membrane-binding signal, that includes its myristoylated N-terminus. Matrix protein is part of the pre-integration complex. Implicated in the release from host cell mediated by Vpu. Binds to RNA. Its function is as follows. Forms the conical core that encapsulates the genomic RNA-nucleocapsid complex in the virion. Most core are conical, with only 7% tubular. The core is constituted by capsid protein hexamer subunits. The core is disassembled soon after virion entry. Host restriction factors such as TRIM5-alpha or TRIMCyp bind retroviral capsids and cause premature capsid disassembly, leading to blocks in reverse transcription. Capsid restriction by TRIM5 is one of the factors which restricts HIV-1 to the human species. Host PIN1 apparently facilitates the virion uncoating. On the other hand, interactions with PDZD8 or CYPA stabilize the capsid. Functionally, encapsulates and protects viral dimeric unspliced genomic RNA (gRNA). Binds these RNAs through its zinc fingers. Acts as a nucleic acid chaperone which is involved in rearangement of nucleic acid secondary structure during gRNA retrotranscription. Also facilitates template switch leading to recombination. As part of the polyprotein, participates in gRNA dimerization, packaging, tRNA incorporation and virion assembly. In terms of biological role, aspartyl protease that mediates proteolytic cleavages of Gag and Gag-Pol polyproteins during or shortly after the release of the virion from the plasma membrane. Cleavages take place as an ordered, step-wise cascade to yield mature proteins. This process is called maturation. Displays maximal activity during the budding process just prior to particle release from the cell. Also cleaves Nef and Vif, probably concomitantly with viral structural proteins on maturation of virus particles. Hydrolyzes host EIF4GI and PABP1 in order to shut off the capped cellular mRNA translation. The resulting inhibition of cellular protein synthesis serves to ensure maximal viral gene expression and to evade host immune response. Multifunctional enzyme that converts the viral RNA genome into dsDNA in the cytoplasm, shortly after virus entry into the cell. This enzyme displays a DNA polymerase activity that can copy either DNA or RNA templates, and a ribonuclease H (RNase H) activity that cleaves the RNA strand of RNA-DNA heteroduplexes in a partially processive 3' to 5' endonucleasic mode. Conversion of viral genomic RNA into dsDNA requires many steps. A tRNA(3)-Lys binds to the primer-binding site (PBS) situated at the 5'-end of the viral RNA. RT uses the 3' end of the tRNA primer to perform a short round of RNA-dependent minus-strand DNA synthesis. The reading proceeds through the U5 region and ends after the repeated (R) region which is present at both ends of viral RNA. The portion of the RNA-DNA heteroduplex is digested by the RNase H, resulting in a ssDNA product attached to the tRNA primer. This ssDNA/tRNA hybridizes with the identical R region situated at the 3' end of viral RNA. This template exchange, known as minus-strand DNA strong stop transfer, can be either intra- or intermolecular. RT uses the 3' end of this newly synthesized short ssDNA to perform the RNA-dependent minus-strand DNA synthesis of the whole template. RNase H digests the RNA template except for two polypurine tracts (PPTs) situated at the 5'-end and near the center of the genome. It is not clear if both polymerase and RNase H activities are simultaneous. RNase H probably can proceed both in a polymerase-dependent (RNA cut into small fragments by the same RT performing DNA synthesis) and a polymerase-independent mode (cleavage of remaining RNA fragments by free RTs). Secondly, RT performs DNA-directed plus-strand DNA synthesis using the PPTs that have not been removed by RNase H as primers. PPTs and tRNA primers are then removed by RNase H. The 3' and 5' ssDNA PBS regions hybridize to form a circular dsDNA intermediate. Strand displacement synthesis by RT to the PBS and PPT ends produces a blunt ended, linear dsDNA copy of the viral genome that includes long terminal repeats (LTRs) at both ends. Its function is as follows. Catalyzes viral DNA integration into the host chromosome, by performing a series of DNA cutting and joining reactions. This enzyme activity takes place after virion entry into a cell and reverse transcription of the RNA genome in dsDNA. The first step in the integration process is 3' processing. This step requires a complex comprising the viral genome, matrix protein, Vpr and integrase. This complex is called the pre-integration complex (PIC). The integrase protein removes 2 nucleotides from each 3' end of the viral DNA, leaving recessed CA OH's at the 3' ends. In the second step, the PIC enters cell nucleus. This process is mediated through integrase and Vpr proteins, and allows the virus to infect a non dividing cell. This ability to enter the nucleus is specific of lentiviruses, other retroviruses cannot and rely on cell division to access cell chromosomes. In the third step, termed strand transfer, the integrase protein joins the previously processed 3' ends to the 5' ends of strands of target cellular DNA at the site of integration. The 5'-ends are produced by integrase-catalyzed staggered cuts, 5 bp apart. A Y-shaped, gapped, recombination intermediate results, with the 5'-ends of the viral DNA strands and the 3' ends of target DNA strands remaining unjoined, flanking a gap of 5 bp. The last step is viral DNA integration into host chromosome. This involves host DNA repair synthesis in which the 5 bp gaps between the unjoined strands are filled in and then ligated. Since this process occurs at both cuts flanking the HIV genome, a 5 bp duplication of host DNA is produced at the ends of HIV-1 integration. Alternatively, Integrase may catalyze the excision of viral DNA just after strand transfer, this is termed disintegration. This is Gag-Pol polyprotein (gag-pol) from Homo sapiens (Human).